The sequence spans 2170 residues: Brefeldin A-inhibited guanine nucleotide-exchange protein 3 (2170 aa).

S471 is modified (phosphoserine). 2 disordered regions span residues 489–547 and 613–634; these read EHTP…MGKV and AAEK…CSLA. The span at 503-524 shows a compositional bias: polar residues; that stretch reads ISISVTTDTGQTTLEGELGQTT. The region spanning 579-792 is the SEC7 domain; sequence RTRSYGSRYS…EELYHQVLDR (214 aa). Over residues 614 to 623 the composition is skewed to basic and acidic residues; sequence AEKDSGRSDV. Residues S628, S632, and S1045 each carry the phosphoserine modification. A helical transmembrane segment spans residues 1488-1508; it reads PGFGIYAVVHLLLPVMSLWLL. The interval 1843–1872 is disordered; sequence SSDSSQQCSSEDEDIFEETAQVSPPRGKEK. S1881 bears the Phosphoserine mark. A compositionally biased stretch (polar residues) spans 1938–1955; it reads FQSESSTPSTGGFSGKNT. 2 disordered regions span residues 1938–1997 and 2024–2058; these read FQSE…RKKE and KRRQ…PLLQ. A compositionally biased stretch (basic and acidic residues) spans 1956–1966; the sequence is PSEDDRREHLS. S1975 and S1984 each carry phosphoserine. Basic and acidic residues-rich tracts occupy residues 1986–1997 and 2036–2045; these read KTEKKDPGRKKE and KEVKVDKKGE. 5 positions are modified to phosphoserine: S2072, S2074, S2088, S2094, and S2096. The interval 2078–2097 is disordered; it reads ELLRQEKRPRSGSTGSSLSV. Positions 2088-2097 are enriched in low complexity; that stretch reads SGSTGSSLSV.

In terms of assembly, interacts with PHB2. As to expression, expressed in pancreatic islet (insulin granules of islet alpha and beta cells) and brain (at protein level).

It is found in the cytoplasmic vesicle. Its subcellular location is the secretory vesicle. It localises to the secretory vesicle membrane. Participates in the regulation of systemic glucose homeostasis, where it negatively regulates insulin granule biogenesis in pancreatic islet beta cells. Also regulates glucagon granule production in pancreatic alpha cells. Inhibits nuclear translocation of the transcriptional coregulator PHB2 and may enhance estrogen receptor alpha (ESR1) transcriptional activity in breast cancer cells. This Mus musculus (Mouse) protein is Brefeldin A-inhibited guanine nucleotide-exchange protein 3.